The sequence spans 299 residues: tRNA(Met) cytidine acetate ligase (299 aa).

Residues 6 to 19, Gly-100, Asn-157, and Arg-182 contribute to the ATP site; that span reads IAEY…HIYM.

This sequence belongs to the TmcAL family.

The protein localises to the cytoplasm. It catalyses the reaction cytidine(34) in elongator tRNA(Met) + acetate + ATP = N(4)-acetylcytidine(34) in elongator tRNA(Met) + AMP + diphosphate. Its function is as follows. Catalyzes the formation of N(4)-acetylcytidine (ac(4)C) at the wobble position of elongator tRNA(Met), using acetate and ATP as substrates. First activates an acetate ion to form acetyladenylate (Ac-AMP) and then transfers the acetyl group to tRNA to form ac(4)C34. This is tRNA(Met) cytidine acetate ligase from Mycoplasma mobile (strain ATCC 43663 / 163K / NCTC 11711) (Mesomycoplasma mobile).